Consider the following 203-residue polypeptide: Nascent polypeptide-associated complex subunit alpha (203 aa).

The span at 1–19 (MADPRIEELPDEEVPKTNV) shows a compositional bias: basic and acidic residues. Positions 1–45 (MADPRIEELPDEEVPKTNVEDAADSSESEAGEEPTIPGGAAVTIH) are disordered. The span at 21–32 (DAADSSESEAGE) shows a compositional bias: acidic residues. The NAC-A/B domain maps to 46-111 (SRNEKKARKA…AKIEDLNSQA (66 aa)). Residues 118–167 (QLAAAEAAGEHAGHDHDHDKGKGKAPETEAKKEEEEDDGEEVDETGLEPK) are disordered. The segment covering 125–150 (AGEHAGHDHDHDKGKGKAPETEAKKE) has biased composition (basic and acidic residues). The segment covering 151 to 163 (EEEDDGEEVDETG) has biased composition (acidic residues). Residues 164–203 (LEPKDIDLVMAQANVSRKKAVKALRENDNDIVNSIMALSI) enclose the UBA domain.

It belongs to the NAC-alpha family. As to quaternary structure, part of the nascent polypeptide-associated complex (NAC), consisting of egd2 and egd1. NAC associates with ribosomes via egd1.

It localises to the cytoplasm. The protein resides in the nucleus. Functionally, component of the nascent polypeptide-associated complex (NAC), a dynamic component of the ribosomal exit tunnel, protecting the emerging polypeptides from interaction with other cytoplasmic proteins to ensure appropriate nascent protein targeting. The NAC complex also promotes mitochondrial protein import by enhancing productive ribosome interactions with the outer mitochondrial membrane and blocks the inappropriate interaction of ribosomes translating non-secretory nascent polypeptides with translocation sites in the membrane of the endoplasmic reticulum. Egd2 may also be involved in transcription regulation. This chain is Nascent polypeptide-associated complex subunit alpha (egd2), found in Emericella nidulans (strain FGSC A4 / ATCC 38163 / CBS 112.46 / NRRL 194 / M139) (Aspergillus nidulans).